We begin with the raw amino-acid sequence, 117 residues long: G antigen 12I (117 aa).

Positions 1-117 (MSWRGRSTYY…PEEGEKQSQC (117 aa)) are disordered. 2 stretches are compositionally biased toward acidic residues: residues 32–45 (FSDE…EEGE) and 87–96 (ECEDGPDGQE). The span at 103-117 (EEVKTPEEGEKQSQC) shows a compositional bias: basic and acidic residues.

It belongs to the GAGE family. Forms tetramers.

The chain is G antigen 12I (GAGE12I) from Homo sapiens (Human).